A 756-amino-acid polypeptide reads, in one-letter code: Conserved oligomeric Golgi complex subunit 2 (756 aa).

The stretch at 62–82 forms a coiled coil; that stretch reads RSELRSHLASLNRELVDLINR. The segment at 173–199 is disordered; sequence WQNEDANSMGRSSMNDENSTQQDGTTM.

This sequence belongs to the COG2 family. Homodimer. Component of the conserved oligomeric Golgi complex which is composed of eight different subunits and is required for normal Golgi morphology and localization. Binds to COG3 and COG4. Interacts with FPP3/VETH1 and FPP2/VETH2; this interaction promotes the association between cortical microtubules and EXO70A1. Binds to SEC15B, and, possibly, with EXO70A1, SEC3A and SEC10A.

It localises to the golgi apparatus membrane. Its function is as follows. Required for normal Golgi morphology and function. Ensures, when in complex with FPP3/VETH1 and FPP2/VETH2, the correct secondary cell wall (SCW) deposition pattern by recruiting exocyst components to cortical microtubules in xylem cells during secondary cell wall deposition. In Arabidopsis thaliana (Mouse-ear cress), this protein is Conserved oligomeric Golgi complex subunit 2.